The sequence spans 395 residues: THAP domain-containing protein 5 (395 aa).

Residues 1–84 form a THAP-type zinc finger; that stretch reads MPRYCAAICC…LKQTAVPTIF (84 aa). The tract at residues 85 to 112 is disordered; the sequence is SLPEDNQGKDPSKKKSQKKNLEDEKEVC. The span at 90-112 shows a compositional bias: basic and acidic residues; the sequence is NQGKDPSKKKSQKKNLEDEKEVC. Positions 321-324 match the HCFC1-binding motif (HBM) motif; it reads EHSY. Positions 348–382 form a coiled coil; the sequence is LELKEQQTLGRLKSLEALIRQLKQENWLSEENVKI.

Interacts with HTRA2; under apoptotic conditions. Interacts with ABRAXAS2. Post-translationally, cleaved by HTRA2 during apoptosis. In terms of tissue distribution, detected in heart. Detected in brain and muscle (at protein level). Highly expressed in the heart. Also found in brain and skeletal muscle.

The protein resides in the nucleus. In terms of biological role, has sequence-specific DNA-binding activity and can function as transcriptional repressor (in vitro). May be a regulator of cell cycle: THAP5 overexpression in human cell lines causes cell cycle arrest at G2/M phase. This is THAP domain-containing protein 5 (THAP5) from Homo sapiens (Human).